We begin with the raw amino-acid sequence, 247 residues long: 4-hydroxy-tetrahydrodipicolinate reductase (247 aa).

Residues 9 to 14, 76 to 78, and 103 to 106 each bind NAD(+); these read GAAGRM, GTT, and APNF. Catalysis depends on His133, which acts as the Proton donor/acceptor. His134 provides a ligand contact to (S)-2,3,4,5-tetrahydrodipicolinate. Lys137 (proton donor) is an active-site residue. 143 to 144 is a binding site for (S)-2,3,4,5-tetrahydrodipicolinate; that stretch reads GT.

It belongs to the DapB family.

Its subcellular location is the cytoplasm. It carries out the reaction (S)-2,3,4,5-tetrahydrodipicolinate + NAD(+) + H2O = (2S,4S)-4-hydroxy-2,3,4,5-tetrahydrodipicolinate + NADH + H(+). The enzyme catalyses (S)-2,3,4,5-tetrahydrodipicolinate + NADP(+) + H2O = (2S,4S)-4-hydroxy-2,3,4,5-tetrahydrodipicolinate + NADPH + H(+). Its pathway is amino-acid biosynthesis; L-lysine biosynthesis via DAP pathway; (S)-tetrahydrodipicolinate from L-aspartate: step 4/4. Functionally, catalyzes the conversion of 4-hydroxy-tetrahydrodipicolinate (HTPA) to tetrahydrodipicolinate. The sequence is that of 4-hydroxy-tetrahydrodipicolinate reductase from Beutenbergia cavernae (strain ATCC BAA-8 / DSM 12333 / CCUG 43141 / JCM 11478 / NBRC 16432 / NCIMB 13614 / HKI 0122).